A 421-amino-acid chain; its full sequence is MRVVFSSMASKSHLFGLVPLAWAFRAAGHEVRVVASPALTEDITAAGLTAVPVGTDVDLVDFMTHAGHDIIDYVRSLDFSERDPATLTWEHLLGMQTVLTPTFYALMSPDTLIEGMVSFCRKWRPDLVIWEPLTFAAPIAAAVTGTPHARLLWGPDITTRARQNFLGLLPDQPEEHREDPLAEWLTWTLEKYGGPAFDEEVVVGQWTIDPAPAAIRLDTGLKTVGMRYVDYNGPSVVPEWLHDEPERRRVCLTLGISSRENSIGQVSIEELLGAVGDVDAEIIATFDAQQLEGVANIPDNVRTVGFVPMHALLPTCAATVHHGGPGSWHTAAIHGVPQVILPDGWDTGVRAQRTQEFGAGIALPVPELTPDQLRESVKRVLDDPAHRAGAARMRDDMLAEPSPAEVVGICEELAAGRREPR.

Residues 1–23 (MRVVFSSMASKSHLFGLVPLAWA) form the signal peptide.

This sequence belongs to the glycosyltransferase 28 family. Heterotetramer composed of EryCII and EryCIII.

The catalysed reaction is 3-O-alpha-L-mycarosylerythronolide B + dTDP-alpha-D-desosamine = erythromycin D + dTDP + H(+). It functions in the pathway antibiotic biosynthesis; erythromycin biosynthesis. Its function is as follows. Catalyzes the conversion of alpha-L-mycarosylerythronolide B into erythromycin D in the erythromycin biosynthesis pathway. This chain is 3-alpha-mycarosylerythronolide B desosaminyl transferase (eryCIII), found in Saccharopolyspora erythraea (strain ATCC 11635 / DSM 40517 / JCM 4748 / NBRC 13426 / NCIMB 8594 / NRRL 2338).